The following is a 416-amino-acid chain: Neurotensin receptor type 2 (416 aa).

The Extracellular segment spans residues 1 to 32 (METSSLWPPRPSPSAGLSLEARLGVDTRLWAK). The helical transmembrane segment at 33–55 (VLFTALYSLIFALGTAGNALSVH) threads the bilayer. Topologically, residues 56–64 (VVLKARAGR) are cytoplasmic. A helical membrane pass occupies residues 65 to 87 (PGRLRYHVLSLALSALLLLLISV). Residues 88–109 (PMELYNFVWSHYPWVFGDLGCR) are Extracellular-facing. Cysteines 108 and 194 form a disulfide. Residues 110–131 (GYYFVRELCAYATVLSVASLSA) form a helical membrane-spanning segment. Topologically, residues 132–154 (ERCLAVCQPLRARRLLTPRRTRR) are cytoplasmic. The chain crosses the membrane as a helical span at residues 155 to 176 (LLSLVWVASLGLALPMAVIMGQ). Residues 177–217 (KHEMERADGEPEPASRVCTVLVSRATLQVFIQVNVLVSFVL) lie on the Extracellular side of the membrane. The chain crosses the membrane as a helical span at residues 218-237 (PLALTAFLNGITVNHLVALY). At 238-297 (SQVPSASAQVNSIPSRLELLSEEGLLGFITWRKTLSLGVQASLVRHKDASQIRSLQHSAQ) the chain is on the cytoplasmic side. A helical membrane pass occupies residues 298–318 (VLRAIVAVYVICWLPYHARRL). Over 319 to 337 (MYCYIPDDGWTDELYDFYH) the chain is Extracellular. The helical transmembrane segment at 338-358 (YFYMVTNTLFYVSSAVTPVLY) threads the bilayer. At 359–416 (NAVSSSFRKLFLESLSSLCGEQRSVVPLPQEAPESTTSTYSFRLWGSPRNPSLGEIQV) the chain is on the cytoplasmic side. The S-palmitoyl cysteine moiety is linked to residue Cys-377. At Ser-410 the chain carries Phosphoserine.

It belongs to the G-protein coupled receptor 1 family. Neurotensin receptor subfamily. NTSR2 sub-subfamily. Expressed maximally in the cerebellum, hippocampus, piriform cortex and neocortex of adult brain.

The protein resides in the cell membrane. Receptor for the tridecapeptide neurotensin. It is associated with G proteins that activate a phosphatidylinositol-calcium second messenger system. The chain is Neurotensin receptor type 2 (Ntsr2) from Mus musculus (Mouse).